A 167-amino-acid chain; its full sequence is MAGSVNKVILVGNLGADPEIRSLGSGDRVANLRIATSETWRDRSSGERKEKTEWHRVVIFNDNLVKVAEQYLRKGSTVYIEGALQTRKWTDNTGQEKYSTEIVLQKFRGELTMLGGRGGDAGMSSGGGDEYGGGYSGGGSSFGGGQRSQPSGPRESFSADLDDEIPF.

The 107-residue stretch at 5 to 111 folds into the SSB domain; the sequence is VNKVILVGNL…IVLQKFRGEL (107 aa). The DNA-binding element occupies 54–60; the sequence is WHRVVIF. Gly residues predominate over residues 118 to 146; sequence GGDAGMSSGGGDEYGGGYSGGGSSFGGGQ. Residues 118 to 167 form a disordered region; the sequence is GGDAGMSSGGGDEYGGGYSGGGSSFGGGQRSQPSGPRESFSADLDDEIPF. The Important for interaction with partner proteins motif lies at 162–167; sequence DDEIPF.

In terms of assembly, homotetramer.

Its function is as follows. Plays an important role in DNA replication, recombination and repair. Binds to ssDNA and to an array of partner proteins to recruit them to their sites of action during DNA metabolism. The polypeptide is Single-stranded DNA-binding protein (ssb) (Caulobacter vibrioides (strain ATCC 19089 / CIP 103742 / CB 15) (Caulobacter crescentus)).